The following is a 201-amino-acid chain: Large ribosomal subunit protein bL25 (201 aa).

Belongs to the bacterial ribosomal protein bL25 family. CTC subfamily. In terms of assembly, part of the 50S ribosomal subunit; part of the 5S rRNA/L5/L18/L25 subcomplex. Contacts the 5S rRNA. Binds to the 5S rRNA independently of L5 and L18.

In terms of biological role, this is one of the proteins that binds to the 5S RNA in the ribosome where it forms part of the central protuberance. This Burkholderia vietnamiensis (strain G4 / LMG 22486) (Burkholderia cepacia (strain R1808)) protein is Large ribosomal subunit protein bL25.